The primary structure comprises 399 residues: Forkhead box protein Q1 (399 aa).

Positions 1-112 are disordered; sequence MKLEVFAPRA…EGARSKPYTR (112 aa). Residues 32 to 54 show a composition bias toward low complexity; it reads LSAAGDDSLGSDGDCAANSPAAG. Residues 55 to 66 are compositionally biased toward gly residues; sequence SGAGDLEGGGGE. The segment at residues 114–205 is a DNA-binding region (fork-head); that stretch reads PKPPYSYIAL…SEYTFADGVF (92 aa). The tract at residues 211-263 is disordered; that stretch reads RLSHRTTVSASGYGGGSPPGPAGTPQPAPTAGSSPIARSPARQEEGSSPASKF. Residues 228–238 are compositionally biased toward pro residues; that stretch reads PPGPAGTPQPA.

The protein resides in the nucleus. Functionally, plays a role in hair follicle differentiation. This chain is Forkhead box protein Q1 (Foxq1), found in Rattus norvegicus (Rat).